The chain runs to 435 residues: Gamma-glutamyl phosphate reductase (435 aa).

It belongs to the gamma-glutamyl phosphate reductase family.

The protein resides in the cytoplasm. It carries out the reaction L-glutamate 5-semialdehyde + phosphate + NADP(+) = L-glutamyl 5-phosphate + NADPH + H(+). Its pathway is amino-acid biosynthesis; L-proline biosynthesis; L-glutamate 5-semialdehyde from L-glutamate: step 2/2. Its function is as follows. Catalyzes the NADPH-dependent reduction of L-glutamate 5-phosphate into L-glutamate 5-semialdehyde and phosphate. The product spontaneously undergoes cyclization to form 1-pyrroline-5-carboxylate. In Parasynechococcus marenigrum (strain WH8102), this protein is Gamma-glutamyl phosphate reductase.